Here is a 798-residue protein sequence, read N- to C-terminus: General transcription and DNA repair factor IIH helicase/translocase subunit XPB (798 aa).

2 disordered regions span residues 1–62 (MGPP…EQIN) and 235–254 (PPGA…GADG). The Nuclear localization signal signature appears at 6–22 (KSRKDRSGGDKFGKKRR). Residues 10 to 25 (DRSGGDKFGKKRRAED) are compositionally biased toward basic and acidic residues. The span at 33–42 (DDNDSLDATE) shows a compositional bias: acidic residues. The region spanning 343 to 504 (MFGNGRARSG…DLNFLIGPKL (162 aa)) is the Helicase ATP-binding domain. 360 to 367 (AGKSLVGV) serves as a coordination point for ATP. The DEVH box signature appears at 457-460 (DEVH). In terms of domain architecture, Helicase C-terminal spans 558–713 (RSCQFLIKYH…KVITHLKGMD (156 aa)). The disordered stretch occupies residues 746–765 (LPGEPGYRPSGSGGAVRRVG).

This sequence belongs to the helicase family. RAD25/XPB subfamily. As to quaternary structure, component of the 7-subunit TFIIH core complex composed of haywire/XPB/ERCC3, XPD/ERCC2, GTF2H1, GTF2H2, GTF2H3, GTF2H4 and GTF2H5, which is active in NER. The core complex associates with the 3-subunit CDK-activating kinase (CAK) module composed of CCNH/cyclin H, CDK7 and MNAT1 to form the 10-subunit holoenzyme (holo-TFIIH) active in transcription. Interacts with PUF60. Interacts with ATF7IP. Interacts with Epstein-Barr virus EBNA2.

It localises to the nucleus. The catalysed reaction is Couples ATP hydrolysis with the unwinding of duplex DNA by translocating in the 3'-5' direction.. The enzyme catalyses ATP + H2O = ADP + phosphate + H(+). Functionally, ATP-dependent 3'-5' DNA helicase/translocase; binds dsDNA rather than ssDNA, unzipping it in a translocase rather than classical helicase activity. Component of the general transcription and DNA repair factor IIH (TFIIH) core complex. When complexed to CDK-activating kinase (CAK), involved in RNA transcription by RNA polymerase II. The ATPase activity of XPB/ERCC3, but not its helicase activity, is required for DNA opening; it may wrap around the damaged DNA wedging it open, causing localized melting and twisting that allows XPD/ERCC2 helicase to anchor. The ATP-dependent helicase activity of XPB/ERCC3 may be required for promoter escape. Also involved in transcription-coupled nucleotide excision repair (NER) of damaged DNA. In NER, TFIIH acts by opening DNA around the lesion to allow the excision of the damaged oligonucleotide and its replacement by a new DNA fragment. The structure of the TFIIH transcription complex differs from the NER-TFIIH complex; large movements by XPD/ERCC2 and XPB/ERCC3 are stabilized by XPA. The polypeptide is General transcription and DNA repair factor IIH helicase/translocase subunit XPB (hay) (Drosophila melanogaster (Fruit fly)).